The primary structure comprises 364 residues: DNA replication and repair protein RecF (364 aa).

30–37 (GDNGAGKT) is an ATP binding site.

Belongs to the RecF family.

The protein localises to the cytoplasm. The RecF protein is involved in DNA metabolism; it is required for DNA replication and normal SOS inducibility. RecF binds preferentially to single-stranded, linear DNA. It also seems to bind ATP. In Stenotrophomonas maltophilia (strain K279a), this protein is DNA replication and repair protein RecF.